Reading from the N-terminus, the 343-residue chain is Anthranilate phosphoribosyltransferase (343 aa).

5-phospho-alpha-D-ribose 1-diphosphate-binding positions include Gly83, 86–87 (GD), Thr91, 93–96 (NIST), 111–119 (KHGGRSVSS), and Ser123. Residue Gly83 coordinates anthranilate. Ser95 is a binding site for Mg(2+). Arg169 is a binding site for anthranilate. Mg(2+) contacts are provided by Asp228 and Glu229.

This sequence belongs to the anthranilate phosphoribosyltransferase family. Homodimer. The cofactor is Mg(2+).

It carries out the reaction N-(5-phospho-beta-D-ribosyl)anthranilate + diphosphate = 5-phospho-alpha-D-ribose 1-diphosphate + anthranilate. It participates in amino-acid biosynthesis; L-tryptophan biosynthesis; L-tryptophan from chorismate: step 2/5. Its function is as follows. Catalyzes the transfer of the phosphoribosyl group of 5-phosphorylribose-1-pyrophosphate (PRPP) to anthranilate to yield N-(5'-phosphoribosyl)-anthranilate (PRA). The polypeptide is Anthranilate phosphoribosyltransferase (Thiobacillus denitrificans (strain ATCC 25259 / T1)).